The primary structure comprises 296 residues: uncharacterized protein (296 aa).

The next 2 membrane-spanning stretches (helical) occupy residues 82–102 and 117–137; these read VVAP…WSVQ and ISVL…SAIF.

The protein resides in the cell membrane. This is an uncharacterized protein from Sinorhizobium fredii (strain NBRC 101917 / NGR234).